Consider the following 751-residue polypeptide: Leucine-rich repeat-containing protein 56 homolog (751 aa).

Residues 1 to 149 form a disordered region; that stretch reads MKKSTVLDAR…IDKSRDNGQL (149 aa). Residues 13–22 are compositionally biased toward pro residues; that stretch reads GPLPRRPQQP. 2 stretches are compositionally biased toward polar residues: residues 28–39 and 60–87; these read RNSSQVEKNNAR and HSQSQSLDTSFAPNTNTTLGSTDVNLNS. LRR repeat units follow at residues 210-235, 236-256, 258-279, 280-304, and 307-328; these read MPQLNSLKLNNSRITELRVLGTNYAN, LRRLWISNCLVSSVSGVGACA, VLEELYASFNSISDIDALTEVS, STLQVVDLEGNDIRDTDMLKRTLPQ, and KMKHLVLKGNPVASSETIVELS. 3 disordered regions span residues 430–538, 645–698, and 717–751; these read SRSH…QRQQ, TCTH…EKDW, and EAALKERVQGSKEVDGGGLEKVESEDEEDVSPVVF. Composition is skewed to polar residues over residues 456-471 and 662-671; these read KNSQSTASSGDSTNQG and QQEQPTTAGA. A compositionally biased stretch (basic and acidic residues) spans 717-738; the sequence is EAALKERVQGSKEVDGGGLEKV. A compositionally biased stretch (acidic residues) spans 739–751; the sequence is ESEDEEDVSPVVF.

The protein belongs to the LRRC56 family.

Its subcellular location is the cell projection. The protein resides in the cilium. The protein localises to the flagellum. Functionally, required for the assembly of dynein arms in the distal portion of flagellum axoneme. The sequence is that of Leucine-rich repeat-containing protein 56 homolog from Trypanosoma brucei brucei (strain 927/4 GUTat10.1).